The chain runs to 158 residues: MFRLTSARALFRVANVAARRTYAEAAADALKLNFALPHETLFAGTAVKQVNLPVKTGQIGILANHVPIVEQLVPGVVEVLEGSESKKFFVSGGFATVQPDSTLSITSVEAFPLDSFSAENVRALLAEAQKNAGAADSRVAAEASIQIEVLEALQAALK.

The transit peptide at 1–22 (MFRLTSARALFRVANVAARRTY) directs the protein to the mitochondrion.

Belongs to the ATPase epsilon chain family. In terms of assembly, F-type ATPases have 2 components, CF(1) - the catalytic core - and CF(0) - the membrane proton channel. CF(1) has five subunits: alpha(3), beta(3), gamma(1), delta(1), epsilon(1). CF(0) has three main subunits: a, b and c.

The protein resides in the mitochondrion. It is found in the mitochondrion inner membrane. Mitochondrial membrane ATP synthase (F(1)F(0) ATP synthase or Complex V) produces ATP from ADP in the presence of a proton gradient across the membrane which is generated by electron transport complexes of the respiratory chain. F-type ATPases consist of two structural domains, F(1) - containing the extramembraneous catalytic core, and F(0) - containing the membrane proton channel, linked together by a central stalk and a peripheral stalk. During catalysis, ATP turnover in the catalytic domain of F(1) is coupled via a rotary mechanism of the central stalk subunits to proton translocation. Part of the complex F(1) domain and of the central stalk which is part of the complex rotary element. Rotation of the central stalk against the surrounding alpha(3)beta(3) subunits leads to hydrolysis of ATP in three separate catalytic sites on the beta subunits. In Eremothecium gossypii (strain ATCC 10895 / CBS 109.51 / FGSC 9923 / NRRL Y-1056) (Yeast), this protein is ATP synthase subunit delta, mitochondrial (ATP16).